A 384-amino-acid polypeptide reads, in one-letter code: MKKQILYLIVLQQLFLCSAYAQQKKSGNIPYRVNVQADSAKQKAIIDNKWVAVGINKPYALQYDDKLRFNGKPSYRFELKAEDNSLEGYAAGETKGRTELSYSYATTNDFKKFPPSVYQNAQKLKTVYHYGKGICEQGSSRSYTFSVYIPSSFPDNATTIFAQWHGAPSRTLVATPEGEIKTLSIEEFLALYDRMIFKKNIAHDKVEKKDKDGKITYVAGKPNGWKVEQGGYPTLAFGFSKGYFYIKANSDRQWLTDKADRNNANPENSEVMKPYSSEYKTSTIAYKMPFAQFPKDCWITFDVAIDWTKYGKEANTILKPGKLDVMMTYTKNKKPQKAHIVNQQEILIGRNDDDGYYFKFGIYRVGNSTVPVTYNLSGYSETAR.

A signal peptide spans 1 to 21; that stretch reads MKKQILYLIVLQQLFLCSAYA. Gln-22 is subject to Blocked amino end (Gln). An O-linked (Man...) serine glycan is attached at Ser-39.

In terms of assembly, monomer. In terms of processing, the N-terminus is blocked.

Its subcellular location is the periplasm. It catalyses the reaction Eliminative cleavage of polysaccharides containing (1-&gt;4)-linked D-glucuronate or L-iduronate residues and (1-&gt;4)-alpha-linked 2-sulfoamino-2-deoxy-6-sulfo-D-glucose residues to give oligosaccharides with terminal 4-deoxy-alpha-D-gluc-4-enuronosyl groups at their non-reducing ends.. Its function is as follows. Degrades heparin and heparan sulfate. Also implicated in the release of heparin-bound growth factors from the extracellular matrix. The polypeptide is Heparin lyase I (Pedobacter heparinus (Flavobacterium heparinum)).